Consider the following 278-residue polypeptide: 4-deoxy-L-threo-5-hexosulose-uronate ketol-isomerase (278 aa).

Zn(2+) contacts are provided by histidine 196, histidine 198, glutamate 203, and histidine 245.

The protein belongs to the KduI family. In terms of assembly, homohexamer. Requires Zn(2+) as cofactor.

The enzyme catalyses 5-dehydro-4-deoxy-D-glucuronate = 3-deoxy-D-glycero-2,5-hexodiulosonate. The protein operates within glycan metabolism; pectin degradation; 2-dehydro-3-deoxy-D-gluconate from pectin: step 4/5. Functionally, catalyzes the isomerization of 5-dehydro-4-deoxy-D-glucuronate to 3-deoxy-D-glycero-2,5-hexodiulosonate. The protein is 4-deoxy-L-threo-5-hexosulose-uronate ketol-isomerase of Escherichia coli O8 (strain IAI1).